A 100-amino-acid chain; its full sequence is Small ribosomal subunit protein uS14 (100 aa).

It belongs to the universal ribosomal protein uS14 family. As to quaternary structure, part of the 30S ribosomal subunit. Contacts proteins S3 and S10.

Binds 16S rRNA, required for the assembly of 30S particles and may also be responsible for determining the conformation of the 16S rRNA at the A site. The chain is Small ribosomal subunit protein uS14 from Gloeothece citriformis (strain PCC 7424) (Cyanothece sp. (strain PCC 7424)).